A 1008-amino-acid polypeptide reads, in one-letter code: Chitin synthase C (1008 aa).

Residues 1 to 160 (MIYEMMVMKR…GGRTIDPNNR (160 aa)) are disordered. The span at 10 to 19 (RSANSRAQNN) shows a compositional bias: low complexity. Residues 34–45 (ESPSRPVSSLGN) show a composition bias toward polar residues. N312 is a glycosylation site (N-linked (GlcNAc...) asparagine). The next 5 helical transmembrane spans lie at 642–662 (FMQL…FYFI), 682–702 (IFVI…IISM), 717–737 (IIVY…LVVI), 755–775 (LFVN…YASF), and 787–807 (SAAY…YAFC). N-linked (GlcNAc...) asparagine glycosylation is present at N833. 2 helical membrane passes run 887–907 (MVSI…EVYG) and 910–930 (AGGT…LALI). The N-linked (GlcNAc...) asparagine glycan is linked to N961.

Belongs to the chitin synthase family. Class II subfamily.

It is found in the cell membrane. The catalysed reaction is [(1-&gt;4)-N-acetyl-beta-D-glucosaminyl](n) + UDP-N-acetyl-alpha-D-glucosamine = [(1-&gt;4)-N-acetyl-beta-D-glucosaminyl](n+1) + UDP + H(+). Polymerizes chitin, a structural polymer of the cell wall and septum, by transferring the sugar moiety of UDP-GlcNAc to the non-reducing end of the growing chitin polymer. Involved in cell wall integrity and mycelial morphology. Plays an important role in septal growth or maintenance. Acts as a positive regulator of conidiation, cellular responses to oxidative stresses, and the production of malic acid. Negatively regulates the citric acid production. The polypeptide is Chitin synthase C (Aspergillus niger (strain ATCC MYA-4892 / CBS 513.88 / FGSC A1513)).